The sequence spans 235 residues: tRNA (guanine-N(1)-)-methyltransferase (235 aa).

Residues glycine 112 and 132-137 (LGDFVL) each bind S-adenosyl-L-methionine.

This sequence belongs to the RNA methyltransferase TrmD family. Homodimer.

It is found in the cytoplasm. It carries out the reaction guanosine(37) in tRNA + S-adenosyl-L-methionine = N(1)-methylguanosine(37) in tRNA + S-adenosyl-L-homocysteine + H(+). Its function is as follows. Specifically methylates guanosine-37 in various tRNAs. In Acaryochloris marina (strain MBIC 11017), this protein is tRNA (guanine-N(1)-)-methyltransferase.